Consider the following 597-residue polypeptide: Elongation factor 4 (597 aa).

The tr-type G domain maps to Lys2–Glu184. Residues Asp14–Thr19 and Asn131–Asp134 contribute to the GTP site.

Belongs to the TRAFAC class translation factor GTPase superfamily. Classic translation factor GTPase family. LepA subfamily.

The protein resides in the cell inner membrane. It carries out the reaction GTP + H2O = GDP + phosphate + H(+). Its function is as follows. Required for accurate and efficient protein synthesis under certain stress conditions. May act as a fidelity factor of the translation reaction, by catalyzing a one-codon backward translocation of tRNAs on improperly translocated ribosomes. Back-translocation proceeds from a post-translocation (POST) complex to a pre-translocation (PRE) complex, thus giving elongation factor G a second chance to translocate the tRNAs correctly. Binds to ribosomes in a GTP-dependent manner. The polypeptide is Elongation factor 4 (Vibrio atlanticus (strain LGP32) (Vibrio splendidus (strain Mel32))).